A 130-amino-acid polypeptide reads, in one-letter code: Small ribosomal subunit protein uS9 (130 aa).

It belongs to the universal ribosomal protein uS9 family.

The polypeptide is Small ribosomal subunit protein uS9 (Clostridioides difficile (strain 630) (Peptoclostridium difficile)).